The following is a 297-amino-acid chain: Homoserine kinase (297 aa).

82 to 92 (PLTRGLGSSAS) lines the ATP pocket.

Belongs to the GHMP kinase family. Homoserine kinase subfamily.

The protein localises to the cytoplasm. It catalyses the reaction L-homoserine + ATP = O-phospho-L-homoserine + ADP + H(+). The protein operates within amino-acid biosynthesis; L-threonine biosynthesis; L-threonine from L-aspartate: step 4/5. In terms of biological role, catalyzes the ATP-dependent phosphorylation of L-homoserine to L-homoserine phosphate. The polypeptide is Homoserine kinase (Bacillus thuringiensis subsp. konkukian (strain 97-27)).